Here is a 92-residue protein sequence, read N- to C-terminus: Large ribosomal subunit protein bL36m (92 aa).

A mitochondrion-targeting transit peptide spans 1–54 (MASLGRKFFAVGVLSRVFPSAFNAQKGLLKNASMFLTPAFRLSPSLLPWNFSRG).

Belongs to the bacterial ribosomal protein bL36 family. As to quaternary structure, component of the mitochondrial large ribosomal subunit (mt-LSU). Mature yeast 74S mitochondrial ribosomes consist of a small (37S) and a large (54S) subunit. The 37S small subunit contains a 15S ribosomal RNA (15S mt-rRNA) and at least 32 different proteins. The 54S large subunit contains a 21S rRNA (21S mt-rRNA) and at least 45 different proteins. bL36m has a zinc binding site.

The protein resides in the mitochondrion. Component of the mitochondrial ribosome (mitoribosome), a dedicated translation machinery responsible for the synthesis of mitochondrial genome-encoded proteins, including at least some of the essential transmembrane subunits of the mitochondrial respiratory chain. The mitoribosomes are attached to the mitochondrial inner membrane and translation products are cotranslationally integrated into the membrane. bL36m may be involved in a process influencing telomere capping. The sequence is that of Large ribosomal subunit protein bL36m (rtc6) from Schizosaccharomyces pombe (strain 972 / ATCC 24843) (Fission yeast).